A 191-amino-acid polypeptide reads, in one-letter code: MTENYIPRLKTRYQDEIRTKLQGEFEFENVMQIPGVTKIVVNMGVGDAARDSKLINGAIEDLTAITGQKPQLRRAKKSIANFKLREGMPIGAKVTLRGDRMWEFLDRLLTVALPRIRDFRGLSDQQFDGHGNYTFGLTEQTMFYEIDVDKIDRPRGMDITVVTTAVTDDEGRSLLRELGFPFKGEDGNRQQ.

Belongs to the universal ribosomal protein uL5 family. In terms of assembly, part of the 50S ribosomal subunit; part of the 5S rRNA/L5/L18/L25 subcomplex. Contacts the 5S rRNA and the P site tRNA. Forms a bridge to the 30S subunit in the 70S ribosome.

In terms of biological role, this is one of the proteins that bind and probably mediate the attachment of the 5S RNA into the large ribosomal subunit, where it forms part of the central protuberance. In the 70S ribosome it contacts protein S13 of the 30S subunit (bridge B1b), connecting the 2 subunits; this bridge is implicated in subunit movement. Contacts the P site tRNA; the 5S rRNA and some of its associated proteins might help stabilize positioning of ribosome-bound tRNAs. The chain is Large ribosomal subunit protein uL5 from Corynebacterium glutamicum (strain R).